Consider the following 1220-residue polypeptide: ATP-dependent helicase/deoxyribonuclease subunit B (1220 aa).

Residues 1–281 (MSMRFIVGRA…VFLTETHRFE (281 aa)) form the UvrD-like helicase ATP-binding domain. Position 8 to 15 (8 to 15 (GRAGTGKS)) interacts with ATP. In terms of domain architecture, UvrD-like helicase C-terminal spans 283-590 (AGLKHLERFY…LVGSLDRSRN (308 aa)). Cysteine 788 provides a ligand contact to [4Fe-4S] cluster. Residues 989-1008 (LAEGSKGSEGSEGSEDSEDS) form a disordered region. [4Fe-4S] cluster contacts are provided by cysteine 1128, cysteine 1131, and cysteine 1137. Residues 1162–1171 (RVQSQDSEQY) show a composition bias toward polar residues. The tract at residues 1162 to 1220 (RVQSQDSEQYPEQHPPTSVPGETSRRALQKDGGNSPRGQELIWLGEDEAGAGKEDDGHE) is disordered. A compositionally biased stretch (basic and acidic residues) spans 1211–1220 (GAGKEDDGHE).

Belongs to the helicase family. AddB/RexB type 1 subfamily. In terms of assembly, heterodimer of AddA and AddB. Mg(2+) serves as cofactor. Requires [4Fe-4S] cluster as cofactor.

Its function is as follows. The heterodimer acts as both an ATP-dependent DNA helicase and an ATP-dependent, dual-direction single-stranded exonuclease. Recognizes the chi site generating a DNA molecule suitable for the initiation of homologous recombination. The AddB subunit has 5' -&gt; 3' nuclease activity but not helicase activity. This is ATP-dependent helicase/deoxyribonuclease subunit B from Desulfitobacterium hafniense (strain Y51).